The following is a 328-amino-acid chain: MLPDPLCDGFGRDVRYLRVSVTDRCDLRCSYCMKEDVTFLPRNQVLSLEELDRLGVRKLRVTGGEPLVRRGIGTFFAAMGTHLRAGRLDELTLTTNGTQLAAHAQSLAECGVKRVNVSLDTLQAEKYARLTRFGRIEQVFAGIAAAQAAGLRVKLNAMALKGVNDDEIFALTDWAAAHHCDLTFIELMPMGDIPAGTRLDQFWPLDDVRAHLETRFRLIDNGLNTGGPARYVTVAQTGQRIGFISPLSHNFCTSCNRVRLTCKGELYTCLGQEGSSDLRPVLRAGVEGEALAREIRAAIARKPAGHAFGYGPCSVAGQMVRGMNHTGG.

A Radical SAM core domain is found at 9–229 (GFGRDVRYLR…DNGLNTGGPA (221 aa)). Arg18 contributes to the GTP binding site. The [4Fe-4S] cluster site is built by Cys25 and Cys29. Tyr31 contacts S-adenosyl-L-methionine. A [4Fe-4S] cluster-binding site is contributed by Cys32. Position 60 (Arg60) interacts with GTP. Residue Gly64 participates in S-adenosyl-L-methionine binding. Thr94 is a binding site for GTP. Ser118 provides a ligand contact to S-adenosyl-L-methionine. Lys154 lines the GTP pocket. Met188 is a binding site for S-adenosyl-L-methionine. [4Fe-4S] cluster is bound by residues Cys252 and Cys255. 257–259 (RVR) serves as a coordination point for GTP. Cys269 is a [4Fe-4S] cluster binding site.

It belongs to the radical SAM superfamily. MoaA family. Monomer and homodimer. [4Fe-4S] cluster serves as cofactor.

It catalyses the reaction GTP + AH2 + S-adenosyl-L-methionine = (8S)-3',8-cyclo-7,8-dihydroguanosine 5'-triphosphate + 5'-deoxyadenosine + L-methionine + A + H(+). It participates in cofactor biosynthesis; molybdopterin biosynthesis. Its function is as follows. Catalyzes the cyclization of GTP to (8S)-3',8-cyclo-7,8-dihydroguanosine 5'-triphosphate. The protein is GTP 3',8-cyclase of Rhodobacter capsulatus (Rhodopseudomonas capsulata).